We begin with the raw amino-acid sequence, 351 residues long: Translation initiation factor eIF2B subunit beta (351 aa).

Belongs to the eIF-2B alpha/beta/delta subunits family. As to quaternary structure, component of the translation initiation factor 2B (eIF2B) complex which is a heterodecamer of two sets of five different subunits: alpha, beta, gamma, delta and epsilon. Subunits alpha, beta and delta comprise a regulatory subcomplex and subunits epsilon and gamma comprise a catalytic subcomplex. Within the complex, the hexameric regulatory complex resides at the center, with the two heterodimeric catalytic subcomplexes bound on opposite sides.

It is found in the cytoplasm. It localises to the cytosol. Its activity is regulated as follows. Activated by the chemical integrated stress response (ISR) inhibitor ISRIB which stimulates guanine nucleotide exchange factor activity for both phosphorylated and unphosphorylated eIF2. Functionally, acts as a component of the translation initiation factor 2B (eIF2B) complex, which catalyzes the exchange of GDP for GTP on eukaryotic initiation factor 2 (eIF2) gamma subunit. Its guanine nucleotide exchange factor activity is repressed when bound to eIF2 complex phosphorylated on the alpha subunit, thereby limiting the amount of methionyl-initiator methionine tRNA available to the ribosome and consequently global translation is repressed. In Homo sapiens (Human), this protein is Translation initiation factor eIF2B subunit beta (EIF2B2).